The chain runs to 144 residues: ATP synthase subunit 9, mitochondrial (144 aa).

The N-terminal 63 residues, 1–63, are a transit peptide targeting the mitochondrion; that stretch reads MASTRVLASR…ATRQITQKRA (63 aa). Transmembrane regions (helical) follow at residues 83–103 and 120–140; these read TAAIGLTGAGIGIGLVFAALL and AILGFAFVEAIGLFDLMVALM.

The protein belongs to the ATPase C chain family. F-type ATPases have 2 components, CF(1) - the catalytic core - and CF(0) - the membrane proton channel. CF(1) has five subunits: alpha(3), beta(3), gamma(1), delta(1), epsilon(1). CF(0) has three main subunits: a, b and c.

It is found in the mitochondrion membrane. Mitochondrial membrane ATP synthase (F(1)F(0) ATP synthase or Complex V) produces ATP from ADP in the presence of a proton gradient across the membrane which is generated by electron transport complexes of the respiratory chain. F-type ATPases consist of two structural domains, F(1) - containing the extramembraneous catalytic core and F(0) - containing the membrane proton channel, linked together by a central stalk and a peripheral stalk. During catalysis, ATP synthesis in the catalytic domain of F(1) is coupled via a rotary mechanism of the central stalk subunits to proton translocation. Part of the complex F(0) domain. A homomeric c-ring of probably 10 subunits is part of the complex rotary element. The chain is ATP synthase subunit 9, mitochondrial (ATP9) from Podospora anserina (Pleurage anserina).